The following is a 267-amino-acid chain: Cilia- and flagella-associated protein 300 (267 aa).

Belongs to the CFAP300 family. In terms of assembly, interacts with DNAAF2.

It localises to the cytoplasm. It is found in the cytoskeleton. The protein resides in the cilium axoneme. Its function is as follows. Cilium- and flagellum-specific protein that plays a role in axonemal structure organization and motility. May play a role in outer and inner dynein arm assembly. The chain is Cilia- and flagella-associated protein 300 from Bos taurus (Bovine).